The primary structure comprises 380 residues: Cytochrome b (380 aa).

The next 4 helical transmembrane spans lie at 34 to 54 (FGSLLAVCLATQIITGLLLAA), 78 to 99 (WLIRNLHANGASFFFICIYLHI), 114 to 134 (WNTGVILLLTLMATAFVGYVL), and 179 to 199 (FFALHFLLPFIIAGITIIHLA). The heme b site is built by histidine 84 and histidine 98. 2 residues coordinate heme b: histidine 183 and histidine 197. Histidine 202 contacts a ubiquinone. Helical transmembrane passes span 227–247 (LKDILGLALMITPLLTLALFS), 289–309 (LGGVLALAASVFILFLIPLLH), 321–341 (LSQLLFWLLAANLFILTWIGS), and 348–368 (FIIIGQLASLSYFTTLLILFP).

Belongs to the cytochrome b family. The cytochrome bc1 complex contains 11 subunits: 3 respiratory subunits (MT-CYB, CYC1 and UQCRFS1), 2 core proteins (UQCRC1 and UQCRC2) and 6 low-molecular weight proteins (UQCRH/QCR6, UQCRB/QCR7, UQCRQ/QCR8, UQCR10/QCR9, UQCR11/QCR10 and a cleavage product of UQCRFS1). This cytochrome bc1 complex then forms a dimer. It depends on heme b as a cofactor.

The protein resides in the mitochondrion inner membrane. Component of the ubiquinol-cytochrome c reductase complex (complex III or cytochrome b-c1 complex) that is part of the mitochondrial respiratory chain. The b-c1 complex mediates electron transfer from ubiquinol to cytochrome c. Contributes to the generation of a proton gradient across the mitochondrial membrane that is then used for ATP synthesis. This Cyrtonyx montezumae (Montezuma quail) protein is Cytochrome b (MT-CYB).